The sequence spans 194 residues: uncharacterized protein (194 aa).

This sequence belongs to the mimivirus R457/R459 family.

The protein localises to the virion. This is an uncharacterized protein from Acanthamoeba polyphaga mimivirus (APMV).